Consider the following 216-residue polypeptide: Protein Syd (216 aa).

It belongs to the Syd family.

The protein localises to the cell inner membrane. Its function is as follows. Interacts with the SecY protein in vivo. May bind preferentially to an uncomplexed state of SecY, thus functioning either as a chelating agent for excess SecY in the cell or as a regulatory factor that negatively controls the translocase function. The protein is Protein Syd of Shewanella sp. (strain ANA-3).